Consider the following 446-residue polypeptide: tRNA-2-methylthio-N(6)-dimethylallyladenosine synthase (446 aa).

Residues 3-120 enclose the MTTase N-terminal domain; that stretch reads KKLFIETHGC…LPEMIDAARS (118 aa). Residues Cys-12, Cys-49, Cys-83, Cys-157, Cys-161, and Cys-164 each contribute to the [4Fe-4S] cluster site. Positions 143 to 375 constitute a Radical SAM core domain; sequence RVDGPTAFVS…QGRIHQQGYE (233 aa). One can recognise a TRAM domain in the interval 378–442; it reads RRMVGSTQRI…PHSLRGTLIE (65 aa).

The protein belongs to the methylthiotransferase family. MiaB subfamily. As to quaternary structure, monomer. The cofactor is [4Fe-4S] cluster.

The protein localises to the cytoplasm. It catalyses the reaction N(6)-dimethylallyladenosine(37) in tRNA + (sulfur carrier)-SH + AH2 + 2 S-adenosyl-L-methionine = 2-methylsulfanyl-N(6)-dimethylallyladenosine(37) in tRNA + (sulfur carrier)-H + 5'-deoxyadenosine + L-methionine + A + S-adenosyl-L-homocysteine + 2 H(+). Catalyzes the methylthiolation of N6-(dimethylallyl)adenosine (i(6)A), leading to the formation of 2-methylthio-N6-(dimethylallyl)adenosine (ms(2)i(6)A) at position 37 in tRNAs that read codons beginning with uridine. The chain is tRNA-2-methylthio-N(6)-dimethylallyladenosine synthase from Pseudomonas paraeruginosa (strain DSM 24068 / PA7) (Pseudomonas aeruginosa (strain PA7)).